The chain runs to 465 residues: Soluble pyridine nucleotide transhydrogenase (465 aa).

36-45 serves as a coordination point for FAD; the sequence is ERYNNVGGGC.

The protein belongs to the class-I pyridine nucleotide-disulfide oxidoreductase family. FAD is required as a cofactor.

It is found in the cytoplasm. The catalysed reaction is NAD(+) + NADPH = NADH + NADP(+). In terms of biological role, conversion of NADPH, generated by peripheral catabolic pathways, to NADH, which can enter the respiratory chain for energy generation. The sequence is that of Soluble pyridine nucleotide transhydrogenase from Serratia proteamaculans (strain 568).